We begin with the raw amino-acid sequence, 63 residues long: Cysteine-rich peptide clone 2 (63 aa).

A signal peptide spans 1–23 (MHFSGVVLILLSMTLVNFVFVET). Disulfide bonds link Cys-33–Cys-53, Cys-38–Cys-58, and Cys-42–Cys-60.

As to expression, expressed by the venom gland.

Its subcellular location is the secreted. This chain is Cysteine-rich peptide clone 2, found in Tityus costatus (Brazilian scorpion).